A 126-amino-acid chain; its full sequence is UPF0235 protein C15orf40 homolog (126 aa).

Residues 1 to 32 (MPKKAGATSKGKNQTKEPETAPPAAGPVATDP) are disordered. S89 bears the Phosphoserine mark.

It belongs to the UPF0235 family.

This Mus musculus (Mouse) protein is UPF0235 protein C15orf40 homolog.